A 361-amino-acid chain; its full sequence is 3-dehydroquinate synthase (361 aa).

It belongs to the archaeal-type DHQ synthase family.

The catalysed reaction is 2-amino-2,3,7-trideoxy-D-lyxo-hept-6-ulosonate + NAD(+) + H2O = 3-dehydroquinate + NH4(+) + NADH + H(+). Functionally, catalyzes the oxidative deamination and cyclization of 2-amino-3,7-dideoxy-D-threo-hept-6-ulosonic acid (ADH) to yield 3-dehydroquinate (DHQ), which is fed into the canonical shikimic pathway of aromatic amino acid biosynthesis. The polypeptide is 3-dehydroquinate synthase (Methanococcus maripaludis (strain C6 / ATCC BAA-1332)).